The following is a 374-amino-acid chain: MSKRDYYEVLGVERGATEADLKKAYRRLAMKYHPDRNPGDKESEDKFKEANEAYEVLSDASKRAAFDQYGHAGVDPSMGGGGAGFGGANFSDIFGDVFSDFFGGGRGGGRGGAQRGSDLRYTLELNLEEAVRGTTVSIRVPTLVNCQPCDGSGAKKGSTPSTCPTCGGIGQVRMQQGFFSVQQTCPRCHGQGKIITDPCTSCHGEGRVEEYKTLSVKVPAGVDTGDRIRLSGEGEAGTHGGPTGDLYVVISVREHEIFQRDGKHLYCEVPISYTDAALGGELEVPTLDGRVKLKIPEGTQTGKQFRLRGKGVAPVRGGGAGDLLCRVAVETPVNLSRRQRELLEELRDSLEGDSSHSPKASGWFDGVKRFFGDL.

The J domain occupies 5-70; sequence DYYEVLGVER…SKRAAFDQYG (66 aa). A CR-type zinc finger spans residues 133–211; the sequence is GTTVSIRVPT…CHGEGRVEEY (79 aa). Zn(2+)-binding residues include Cys146, Cys149, Cys163, Cys166, Cys185, Cys188, Cys199, and Cys202. CXXCXGXG motif repeat units lie at residues 146-153, 163-170, 185-192, and 199-206; these read CQPCDGSG, CPTCGGIG, CPRCHGQG, and CTSCHGEG.

This sequence belongs to the DnaJ family. In terms of assembly, homodimer. Requires Zn(2+) as cofactor.

The protein resides in the cytoplasm. Its function is as follows. Participates actively in the response to hyperosmotic and heat shock by preventing the aggregation of stress-denatured proteins and by disaggregating proteins, also in an autonomous, DnaK-independent fashion. Unfolded proteins bind initially to DnaJ; upon interaction with the DnaJ-bound protein, DnaK hydrolyzes its bound ATP, resulting in the formation of a stable complex. GrpE releases ADP from DnaK; ATP binding to DnaK triggers the release of the substrate protein, thus completing the reaction cycle. Several rounds of ATP-dependent interactions between DnaJ, DnaK and GrpE are required for fully efficient folding. Also involved, together with DnaK and GrpE, in the DNA replication of plasmids through activation of initiation proteins. This Pseudomonas putida (strain ATCC 700007 / DSM 6899 / JCM 31910 / BCRC 17059 / LMG 24140 / F1) protein is Chaperone protein DnaJ.